A 75-amino-acid polypeptide reads, in one-letter code: UPF0270 protein PFLU_4323 (75 aa).

This sequence belongs to the UPF0270 family.

In Pseudomonas fluorescens (strain SBW25), this protein is UPF0270 protein PFLU_4323.